Reading from the N-terminus, the 122-residue chain is Small ribosomal subunit protein uS13 (122 aa).

Residues 93 to 122 (RLSLPVRGQRTKTNSRTRKGKRKTVAGKKK) form a disordered region. Positions 101–122 (QRTKTNSRTRKGKRKTVAGKKK) are enriched in basic residues.

This sequence belongs to the universal ribosomal protein uS13 family. As to quaternary structure, part of the 30S ribosomal subunit. Forms a loose heterodimer with protein S19. Forms two bridges to the 50S subunit in the 70S ribosome.

In terms of biological role, located at the top of the head of the 30S subunit, it contacts several helices of the 16S rRNA. In the 70S ribosome it contacts the 23S rRNA (bridge B1a) and protein L5 of the 50S subunit (bridge B1b), connecting the 2 subunits; these bridges are implicated in subunit movement. Contacts the tRNAs in the A and P-sites. This chain is Small ribosomal subunit protein uS13, found in Chlamydia pneumoniae (Chlamydophila pneumoniae).